Here is a 513-residue protein sequence, read N- to C-terminus: Abl interactor 2 (513 aa).

Residue serine 40 is modified to Phosphoserine. Positions 45–107 (RALEETKAYT…DIHKEKVARR (63 aa)) constitute a t-SNARE coiled-coil homology domain. Residues 167–431 (KMGGLPRTTP…PPEDYEEEEA (265 aa)) form a disordered region. The span at 174-185 (TTPPTQKPPSPP) shows a compositional bias: pro residues. Residues serine 183 and serine 227 each carry the phosphoserine modification. The span at 217 to 241 (PTRNMAPSQQSPVRTASVNQRNRTY) shows a compositional bias: polar residues. Low complexity predominate over residues 242–272 (SSSGSSGGSHPSSRSSSRENSGSGSVGVPIA). Residues 273–282 (VPTPSPPSVF) show a composition bias toward pro residues. Over residues 283–325 (PAPAGSAGTPPLPATSASAPAPLVPATVPSSTAPNAAAGGAPN) the composition is skewed to low complexity. Phosphothreonine is present on threonine 361. Serine 368 carries the phosphoserine modification. The segment covering 376–399 (SITSQTSLQNQMNGGPFYSQNPVS) has biased composition (polar residues). Residues 400–409 (DTPPPPPPVE) are compositionally biased toward pro residues. The 60-residue stretch at 451 to 510 (SYLEKVVAIYDYTKDKEDELSFQEGAIIYVIKKNDDGWYEGVMNGVTGLFPGNYVESIMH) folds into the SH3 domain.

This sequence belongs to the ABI family. In terms of assembly, component of the WAVE complex composed of ABI2, CYFIP1 or CYFIP2, BRK1, NCKAP1 and WASF1/WAVE1. Within the complex, a heterodimer containing NCKAP1 and CYFIP1 interacts with a heterotrimer formed by WAVE1, ABI2 and BRK1. CYFIP2 binds to activated RAC1 which causes the complex to dissociate, releasing activated WASF1. Interacts (via SH3 domain) with ABL1 and ABL2. As to quaternary structure, (Microbial infection) Interacts with human cytomegalovirus UL135. In terms of processing, phosphorylated by ABL1. Widely expressed. Abundant in testes, ovary, thymus, and colon, with lower but detectable levels in prostate, peripheral blood leukocytes, and spleen.

The protein resides in the cytoplasm. The protein localises to the nucleus. It is found in the cell projection. Its subcellular location is the lamellipodium. It localises to the filopodium. The protein resides in the cytoskeleton. The protein localises to the cell junction. It is found in the adherens junction. Its function is as follows. Regulator of actin cytoskeleton dynamics underlying cell motility and adhesion. Functions as a component of the WAVE complex, which activates actin nucleating machinery Arp2/3 to drive lamellipodia formation. Acts as a regulator and substrate of nonreceptor tyrosine kinases ABL1 and ABL2 involved in processes linked to cell growth and differentiation. Positively regulates ABL1-mediated phosphorylation of ENAH, which is required for proper polymerization of nucleated actin filaments at the leading edge. Contributes to the regulation of actin assembly at the tips of neuron projections. In particular, controls dendritic spine morphogenesis and may promote dendritic spine specification toward large mushroom-type spines known as repositories of memory in the brain. In hippocampal neurons, may mediate actin-dependent BDNF-NTRK2 early endocytic trafficking that triggers dendrite outgrowth. Participates in ocular lens morphogenesis, likely by regulating lamellipodia-driven adherens junction formation at the epithelial cell-secondary lens fiber interface. Also required for nascent adherens junction assembly in epithelial cells. In Homo sapiens (Human), this protein is Abl interactor 2.